A 618-amino-acid polypeptide reads, in one-letter code: Probable Xaa-Pro aminopeptidase P (618 aa).

Residues Asp-415, Asp-426, Glu-524, and Glu-538 each coordinate Mn(2+).

It belongs to the peptidase M24B family. Mn(2+) is required as a cofactor.

It carries out the reaction Release of any N-terminal amino acid, including proline, that is linked to proline, even from a dipeptide or tripeptide.. Its function is as follows. Catalyzes the removal of a penultimate prolyl residue from the N-termini of peptides. The chain is Probable Xaa-Pro aminopeptidase P (AMPP) from Pyricularia oryzae (strain 70-15 / ATCC MYA-4617 / FGSC 8958) (Rice blast fungus).